We begin with the raw amino-acid sequence, 628 residues long: Serine/threonine-protein kinase Nek11 (628 aa).

The region spanning 30–288 is the Protein kinase domain; that stretch reads YVLQQKLGSG…AADILKAPYM (259 aa). ATP is bound by residues 36–44 and Lys-62; that span reads LGSGSFGTV. Asp-159 functions as the Proton acceptor in the catalytic mechanism. Residue Ser-274 is modified to Phosphoserine; by CHEK1. Positions 347-385 form a coiled coil; the sequence is WLRKLQAADERARRLKKIAEENYKENDKRMQALRSRNVG. The segment covering 452 to 463 has biased composition (acidic residues); that stretch reads SEDSEEQEEEMI. A disordered region spans residues 452–475; that stretch reads SEDSEEQEEEMIFSEAGGDTKEEE.

This sequence belongs to the protein kinase superfamily. NEK Ser/Thr protein kinase family. NIMA subfamily. Interacts with NEK2. The cofactor is Mn(2+). Mg(2+) serves as cofactor. Post-translationally, phosphorylated by NEK2. Phosphorylation at Ser-274 is important for its activation.

It localises to the nucleus. The protein resides in the nucleolus. It catalyses the reaction L-seryl-[protein] + ATP = O-phospho-L-seryl-[protein] + ADP + H(+). The enzyme catalyses L-threonyl-[protein] + ATP = O-phospho-L-threonyl-[protein] + ADP + H(+). Its activity is regulated as follows. Autorepressed by intramolecular binding of the C-terminus which dissociates following phosphorylation by NEK2. Activated in response to DNA damage. Inhibited by zinc. In terms of biological role, protein kinase which plays an important role in the G2/M checkpoint response to DNA damage. Controls degradation of CDC25A by directly phosphorylating it on residues whose phosphorylation is required for BTRC-mediated polyubiquitination and degradation. This Mus musculus (Mouse) protein is Serine/threonine-protein kinase Nek11.